We begin with the raw amino-acid sequence, 188 residues long: Adenine phosphoribosyltransferase (188 aa).

It belongs to the purine/pyrimidine phosphoribosyltransferase family. In terms of assembly, homodimer.

It is found in the cytoplasm. It catalyses the reaction AMP + diphosphate = 5-phospho-alpha-D-ribose 1-diphosphate + adenine. It participates in purine metabolism; AMP biosynthesis via salvage pathway; AMP from adenine: step 1/1. In terms of biological role, catalyzes a salvage reaction resulting in the formation of AMP, that is energically less costly than de novo synthesis. The sequence is that of Adenine phosphoribosyltransferase from Salinispora arenicola (strain CNS-205).